Here is a 409-residue protein sequence, read N- to C-terminus: Growth-regulating factor 8 (409 aa).

2 stretches are compositionally biased toward gly residues: residues 1 to 10 (MLSSCGGHGH) and 27 to 36 (QQGGGGGGGQ). Residues 1–81 (MLSSCGGHGH…GGGGQMLSFS (81 aa)) are disordered. A compositionally biased stretch (low complexity) spans 56-68 (SSSSFLGSTSSSC). In terms of domain architecture, QLQ spans 107 to 142 (PFTPTQWMELEHQALIYKHIAANVSVPSSLLLPIRR). The region spanning 158 to 202 (DVEPRRCRRTDGKKWRCSRDAVGDQKYCERHINRGRHRSRKHVEG) is the WRC domain. 2 short sequence motifs (bipartite nuclear localization signal) span residues 163–173 (RCRRTDGKKWR) and 191–198 (RGRHRSRK). The tract at residues 221 to 242 (SSRGHTVARQKQVKGSAATVSD) is disordered.

Belongs to the GRF family.

The protein resides in the nucleus. In terms of biological role, transcription activator that plays a regulatory role in gibberellin-induced stem elongation. The chain is Growth-regulating factor 8 (GRF8) from Oryza sativa subsp. japonica (Rice).